The primary structure comprises 101 residues: Ubiquitin-related modifier 1 (101 aa).

Position 101 is a 1-thioglycine (glycine 101). Residue glycine 101 forms a Glycyl lysine isopeptide (Gly-Lys) (interchain with K-? in acceptor proteins) linkage.

The protein belongs to the URM1 family. Post-translationally, C-terminal thiocarboxylation occurs in 2 steps, it is first acyl-adenylated (-COAMP) via the hesA/moeB/thiF part of UBA4, then thiocarboxylated (-COSH) via the rhodanese domain of UBA4.

It localises to the cytoplasm. The protein operates within tRNA modification; 5-methoxycarbonylmethyl-2-thiouridine-tRNA biosynthesis. In terms of biological role, acts as a sulfur carrier required for 2-thiolation of mcm(5)S(2)U at tRNA wobble positions of cytosolic tRNA(Lys), tRNA(Glu) and tRNA(Gln). Serves as sulfur donor in tRNA 2-thiolation reaction by being thiocarboxylated (-COSH) at its C-terminus by the MOCS3 homolog UBA4. The sulfur is then transferred to tRNA to form 2-thiolation of mcm(5)S(2)U. Prior mcm(5) tRNA modification by the elongator complex is required for 2-thiolation. Also acts as a ubiquitin-like protein (UBL) that is covalently conjugated via an isopeptide bond to lysine residues of target proteins such as AHP1. The thiocarboxylated form serves as substrate for conjugation and oxidative stress specifically induces the formation of UBL-protein conjugates. This Debaryomyces hansenii (strain ATCC 36239 / CBS 767 / BCRC 21394 / JCM 1990 / NBRC 0083 / IGC 2968) (Yeast) protein is Ubiquitin-related modifier 1.